The sequence spans 280 residues: Glycoprotein G (280 aa).

An N-terminal signal peptide occupies residues 1–24 (MGHSGENVLCVALLAIYLAAGGAA). 2 N-linked (GlcNAc...) asparagine; by host glycosylation sites follow: Asn85 and Asn111. The tract at residues 191-218 (ESSEERVVATDSDSGSCEDDEKEEKSDC) is disordered.

Belongs to the alphaherpesvirinae glycoprotein G family.

This chain is Glycoprotein G (gG), found in Psittacid herpesvirus 1 (isolate Amazon parrot/-/97-0001/1997) (PsHV-1).